The chain runs to 357 residues: MKVDPNKEKALAAVLSQIEKQFGKGSIMKLGEDRSMDVETISTGSLSLDVALGAGGLPMGRIVEIYGPESSGKTTLTLEVIAAAQREGKTCAFIDAEHALDPIYAKKLGVDIDNLLCSQPDTGEQALEICDALTRSGAVDVIVVDSVAALTPKAEIEGEIGDSHMGLAARMMSQAMRKLAGNLKQSNTLLIFINQIRMKIGVMFGNPETTTGGNALKFYASVRLDIRRTGAIKDGDEVVGNETRVKVVKNKVAAPFKQAEFQILYGQGINRTGELVDLGVAHKLIEKAGAWYSYKGDKIGQGRANAGKYLTENPAIAAEIDKTLRELLLSNPSALASSASDDESTEGNIDLETGEIF.

Residue Gly67–Thr74 participates in ATP binding. Positions Leu335 to Phe357 are disordered.

It belongs to the RecA family.

Its subcellular location is the cytoplasm. Its function is as follows. Can catalyze the hydrolysis of ATP in the presence of single-stranded DNA, the ATP-dependent uptake of single-stranded DNA by duplex DNA, and the ATP-dependent hybridization of homologous single-stranded DNAs. It interacts with LexA causing its activation and leading to its autocatalytic cleavage. In Shewanella putrefaciens (strain CN-32 / ATCC BAA-453), this protein is Protein RecA.